The primary structure comprises 394 residues: N-acetylgalactosamine-6-phosphate deacetylase (394 aa).

Glu137 is a Zn(2+) binding site. Position 148-149 (148-149 (CH)) interacts with substrate. Zn(2+) contacts are provided by His201 and His222. Residues 225-226 (NG), Arg233, and 254-257 (DGQH) contribute to the substrate site. The Proton donor/acceptor role is filled by Asp280. Residue 313 to 315 (LAG) coordinates substrate.

Belongs to the metallo-dependent hydrolases superfamily. NagA family.

The protein localises to the cytoplasm. The enzyme catalyses N-acetyl-D-galactosamine 6-phosphate + H2O = D-galactosamine 6-phosphate + acetate. The catalysed reaction is N-acetyl-D-glucosamine 6-phosphate + H2O = D-glucosamine 6-phosphate + acetate. Its function is as follows. Involved in the pathway of N-acetyl-D-galactosamine degradation. Catalyzes the conversion of N-acetyl-D-galactosamine 6-phosphate to D-galactosamine 6-phosphate and acetate. It can also catalyze the conversion of N-acetyl-D-glucosamine 6-phosphate. In Shewanella sp. (strain ANA-3), this protein is N-acetylgalactosamine-6-phosphate deacetylase.